Reading from the N-terminus, the 82-residue chain is Cytochrome b559 subunit alpha (82 aa).

A helical membrane pass occupies residues 22 to 36 (IIHAVTLPAIFIAGF). Histidine 24 provides a ligand contact to heme.

It belongs to the PsbE/PsbF family. Heterodimer of an alpha subunit and a beta subunit. PSII is composed of 1 copy each of membrane proteins PsbA, PsbB, PsbC, PsbD, PsbE, PsbF, PsbH, PsbI, PsbJ, PsbK, PsbL, PsbM, PsbT, PsbX, PsbY, Psb30/Ycf12, peripheral proteins PsbO, CyanoQ (PsbQ), PsbU, PsbV and a large number of cofactors. It forms dimeric complexes. Heme b serves as cofactor.

It is found in the cellular thylakoid membrane. Its function is as follows. This b-type cytochrome is tightly associated with the reaction center of photosystem II (PSII). PSII is a light-driven water:plastoquinone oxidoreductase that uses light energy to abstract electrons from H(2)O, generating O(2) and a proton gradient subsequently used for ATP formation. It consists of a core antenna complex that captures photons, and an electron transfer chain that converts photonic excitation into a charge separation. In Prochlorococcus marinus (strain MIT 9515), this protein is Cytochrome b559 subunit alpha.